Here is a 342-residue protein sequence, read N- to C-terminus: Protein RecA (342 aa).

65–72 (GPESSGKT) contributes to the ATP binding site.

This sequence belongs to the RecA family.

Its subcellular location is the cytoplasm. In terms of biological role, can catalyze the hydrolysis of ATP in the presence of single-stranded DNA, the ATP-dependent uptake of single-stranded DNA by duplex DNA, and the ATP-dependent hybridization of homologous single-stranded DNAs. It interacts with LexA causing its activation and leading to its autocatalytic cleavage. The polypeptide is Protein RecA (Teredinibacter turnerae (strain ATCC 39867 / T7901)).